The primary structure comprises 193 residues: Phosphoheptose isomerase (193 aa).

One can recognise an SIS domain in the interval 37 to 193 (LAASFKADGK…QLIEKEMASV (157 aa)). Position 52–54 (52–54 (NGG)) interacts with substrate. Zn(2+) is bound by residues H61 and E65. Residues E65, 93 to 94 (ND), 119 to 121 (STS), S124, and Q172 each bind substrate. Q172 and H180 together coordinate Zn(2+).

This sequence belongs to the SIS family. GmhA subfamily. As to quaternary structure, homotetramer. It depends on Zn(2+) as a cofactor.

It localises to the cytoplasm. It carries out the reaction 2 D-sedoheptulose 7-phosphate = D-glycero-alpha-D-manno-heptose 7-phosphate + D-glycero-beta-D-manno-heptose 7-phosphate. Its pathway is carbohydrate biosynthesis; D-glycero-D-manno-heptose 7-phosphate biosynthesis; D-glycero-alpha-D-manno-heptose 7-phosphate and D-glycero-beta-D-manno-heptose 7-phosphate from sedoheptulose 7-phosphate: step 1/1. In terms of biological role, catalyzes the isomerization of sedoheptulose 7-phosphate in D-glycero-D-manno-heptose 7-phosphate. The chain is Phosphoheptose isomerase from Edwardsiella ictaluri (strain 93-146).